The sequence spans 484 residues: Acid alpha-amylase (484 aa).

A glycan (N-linked (GlcNAc...) asparagine) is linked at Asn24. Cys30 and Cys38 are disulfide-bonded. A substrate-binding site is contributed by Trp83. Asp121 is a Ca(2+) binding site. Position 122 (His122) interacts with substrate. A disulfide bond links Cys150 and Cys164. N-linked (GlcNAc...) asparagine glycosylation occurs at Asn157. Ca(2+) is bound by residues Glu162 and Asp175. Asn197 carries N-linked (GlcNAc...) asparagine glycosylation. Arg204 provides a ligand contact to substrate. Residues Asp206, Glu210, and Glu230 each coordinate Ca(2+). The Nucleophile role is filled by Asp206. 209-210 (LE) contributes to the substrate binding site. Glu230 serves as the catalytic Proton donor. Gly234 contributes to the substrate binding site. An intrachain disulfide couples Cys240 to Cys283. Asp297 and Arg344 together coordinate substrate. A disulfide bond links Cys440 and Cys475.

This sequence belongs to the glycosyl hydrolase 13 family. In terms of assembly, monomer. Ca(2+) serves as cofactor.

It is found in the secreted. The catalysed reaction is Endohydrolysis of (1-&gt;4)-alpha-D-glucosidic linkages in polysaccharides containing three or more (1-&gt;4)-alpha-linked D-glucose units.. This Aspergillus niger protein is Acid alpha-amylase.